A 259-amino-acid polypeptide reads, in one-letter code: uncharacterized protein (259 aa).

The protein belongs to the ParA family.

This is an uncharacterized protein from Methanocaldococcus jannaschii (strain ATCC 43067 / DSM 2661 / JAL-1 / JCM 10045 / NBRC 100440) (Methanococcus jannaschii).